A 520-amino-acid chain; its full sequence is Maturase K (520 aa).

Belongs to the intron maturase 2 family. MatK subfamily.

The protein localises to the plastid. It is found in the chloroplast. Its function is as follows. Usually encoded in the trnK tRNA gene intron. Probably assists in splicing its own and other chloroplast group II introns. This chain is Maturase K, found in Linum perenne (Perennial flax).